The sequence spans 276 residues: 3-keto-5-aminohexanoate cleavage enzyme (276 aa).

Glutamate 14 is a (5S)-5-amino-3-oxohexanoate binding site. Histidine 46 and histidine 48 together coordinate Zn(2+). Residues serine 82, glycine 85, threonine 106, and asparagine 108 each coordinate (5S)-5-amino-3-oxohexanoate. Glutamate 230 is a Zn(2+) binding site.

This sequence belongs to the BKACE family. Kce subfamily. As to quaternary structure, homotetramer. Requires Zn(2+) as cofactor.

It carries out the reaction (5S)-5-amino-3-oxohexanoate + acetyl-CoA = (3S)-3-aminobutanoyl-CoA + acetoacetate. The protein operates within amino-acid degradation; L-lysine degradation via acetate pathway. Involved in the anaerobic fermentation of lysine. Catalyzes the reversible reaction between 3-keto-5-aminohexanoate (KAH) and acetyl-CoA to form 3-aminobutyryl-CoA and acetoacetate. The reaction involves the deprotonation of KAH, the nucleophilic addition onto acetyl-CoA and the intramolecular transfer of the CoA moiety. This chain is 3-keto-5-aminohexanoate cleavage enzyme, found in Cloacimonas acidaminovorans (strain Evry).